The chain runs to 70 residues: Guanine nucleotide-binding protein G(I)/G(S)/G(O) subunit gamma-8 (70 aa).

Position 67 is a cysteine methyl ester (C67). C67 carries the S-geranylgeranyl cysteine lipid modification. The propeptide at 68 to 70 (TLL) is removed in mature form.

Belongs to the G protein gamma family. G proteins are composed of 3 units, alpha, beta and gamma. As to expression, detected in the olfactory epithelium, the vomeronasal epithelium and, to a lesser extent, the olfactory bulb.

The protein resides in the cell membrane. Its function is as follows. Guanine nucleotide-binding proteins (G proteins) are involved as a modulator or transducer in various transmembrane signaling systems. The beta and gamma chains are required for the GTPase activity, for replacement of GDP by GTP, and for G protein-effector interaction. This subunit may have a very specific role in the development and turnover of olfactory and vomeronasal neurons. This chain is Guanine nucleotide-binding protein G(I)/G(S)/G(O) subunit gamma-8 (Gng8), found in Rattus norvegicus (Rat).